The following is a 993-amino-acid chain: MASSTVESFVAQQLQLLELERDAEVEERRSWQEHSSLRELQSRGVCLLKLQVSSQRTGLYGQRLVTFEPRKFGPAVVLPSNSFTSGDIVGLYDTNENSQLATGVLTRITQKSVTVAFDESHDLQLNLDRENTYRLLKLANDVTYKRLKKALMTLKKYHSGPASSLIDILLGSSTPSPAMEIPPLSFYNTTLDLSQKEAVSFALAQKELAIIHGPPGTGKTTTVVEIILQAVKQGLKVLCCAPSNIAVDNLVERLALCKKRILRLGHPARLLESVQHHSLDAVLARSDNAQIVADIRRDIDQVFGKNKKTQDKREKGNFRSEIKLLRKELKEREEAAIVQSLTAADVVLATNTGASSDGPLKLLPEDYFDVVVVDECAQALEASCWIPLLKAPKCILAGDHRQLPPTTVSHRAALAGLSRSLMERLAEKHGAGVVRMLTVQYRMHQAIMCWASEAMYHGQFTSHPSVAGHLLKDLPGVTDTEETRVPLLLIDTAGCGLLELEEEDSQSKGNPGEVRLVTLHIQALVDAGVQAGDIAVIAPYNLQVDLLRQSLSNKHPELEIKSVDGFQGREKEAVLLTFVRSNRKGEVGFLAEDRRINVAVTRARRHVAVICDSHTVNNHAFLETLVDYFTEHGEVRTAFEYLDDIVPENYTHEGSQGHSRVPKPKCPSTSIRKPASDQESGQETRAAPRHGRRKPSEKPPGSHVQSQHSSSANGSDRTGGPDRTEHFRATIEEFVASKESQLEFPTSLSSHDRLRVHQLAEEFGLRHDSTGEGKARHITVSRRSPASSGSVAPQPSSPPSPAQAEPEPRAEEPVTVVQAHCPVQLDLKALHLERLQRQQSSQAQTAKGQPGGDSRPQKASQKKKKKEPKGPVMALPCEEDFDALVSAVVKADNTCSFSKCSVSTTTLGQFCMHCSHRYYLSHHLPEIHGCGEKARAHARQRISREGVLYAGSGTKDRALDPAKRAQLQRRLDKKLGELSSQRTSRKKEKERGT.

N-acetylalanine is present on Ala-2. ATP is bound by residues 213–220 (GPPGTGKT), Gln-402, Tyr-441, and Glu-570. An SS DNA-binding region spans residues 637–783 (TAFEYLDDIV…KARHITVSRR (147 aa)). 3 disordered regions span residues 650–723 (YTHE…GPDR), 765–815 (LRHD…EPVT), and 837–872 (RQQS…KGPV). Polar residues-rich tracts occupy residues 667 to 683 (PSTS…SGQE) and 703 to 716 (HVQS…NGSD). The R3H domain maps to 721–784 (PDRTEHFRAT…ARHITVSRRS (64 aa)). Basic and acidic residues predominate over residues 765–775 (LRHDSTGEGKA). The segment covering 784–794 (SPASSGSVAPQ) has biased composition (low complexity). A phosphoserine mark is found at Ser-797 and Ser-800. The segment covering 837-847 (RQQSSQAQTAK) has biased composition (polar residues). The Nuclear localization signal motif lies at 862–866 (KKKKK). The AN1-type; degenerate zinc-finger motif lies at 889–938 (VKADNTCSFSKCSVSTTTLGQFCMHCSHRYYLSHHLPEIHGCGEKARAHA). Positions 911, 914, 928, and 930 each coordinate Zn(2+). The interval 953 to 993 (GTKDRALDPAKRAQLQRRLDKKLGELSSQRTSRKKEKERGT) is disordered. Over residues 954–976 (TKDRALDPAKRAQLQRRLDKKLG) the composition is skewed to basic and acidic residues.

Belongs to the DNA2/NAM7 helicase family. In terms of assembly, homooligomer. Interacts with RUVBL1. Interacts with RUVBL2. Interacts with GTF3C1. Interacts with ABT1. Interacts with ribosomes. In all tissues examined.

It localises to the nucleus. The protein localises to the cytoplasm. It is found in the cell projection. Its subcellular location is the axon. It carries out the reaction ATP + H2O = ADP + phosphate + H(+). Functionally, 5' to 3' helicase that unwinds RNA and DNA duplexes in an ATP-dependent reaction. Specific to 5'-phosphorylated single-stranded guanine-rich sequences. May play a role in RNA metabolism, ribosome biogenesis or initiation of translation. May play a role in regulation of transcription. Interacts with tRNA-Tyr. This Mus musculus (Mouse) protein is DNA-binding protein SMUBP-2 (Ighmbp2).